Consider the following 300-residue polypeptide: Cation-efflux pump FieF (300 aa).

The next 4 membrane-spanning stretches (helical) occupy residues 12–32 (AAIAATAMALALLLIKIFAWW), 39–59 (ILAALVDSLVDIAASLTNLLV), 82–102 (AALAQSMFISGSALFLFLTSI), and 114–134 (PGVGIGVTVIALICTIILVTF). Residues D45 and D49 each contribute to the Zn(2+) site. Residues H153 and D157 each coordinate Zn(2+). 2 consecutive transmembrane segments (helical) span residues 156–176 (SDVMMNGAILIALGLSWYGWH) and 178–198 (ADALFALGIGIYILYSALRMG).

This sequence belongs to the cation diffusion facilitator (CDF) transporter (TC 2.A.4) family. FieF subfamily. As to quaternary structure, homodimer.

The protein localises to the cell inner membrane. It carries out the reaction Zn(2+)(in) + H(+)(out) = Zn(2+)(out) + H(+)(in). It catalyses the reaction Cd(2+)(in) + H(+)(out) = Cd(2+)(out) + H(+)(in). The catalysed reaction is Fe(2+)(in) + H(+)(out) = Fe(2+)(out) + H(+)(in). Its function is as follows. Divalent metal cation transporter which exports Zn(2+), Cd(2+) and possibly Fe(2+). May be involved in zinc and iron detoxification by efflux. The sequence is that of Cation-efflux pump FieF from Salmonella arizonae (strain ATCC BAA-731 / CDC346-86 / RSK2980).